A 678-amino-acid polypeptide reads, in one-letter code: Dihydroxyacetone phosphate acyltransferase (678 aa).

Phosphoserine is present on residues serine 12 and serine 17. The short motif at 161–166 is the HXXXXD motif element; sequence HRSYID. At lysine 641 the chain carries N6-acetyllysine. A Microbody targeting signal motif is present at residues 676–678; it reads AKL.

Belongs to the GPAT/DAPAT family. In terms of assembly, part of a heterotrimeric complex composed of GNPAT, AGPS and a modified form of GNPAT. In terms of tissue distribution, highly expressed in liver and testis. Lower levels in heart, brain, lung and kidney. Detected in spleen.

The protein resides in the peroxisome membrane. It catalyses the reaction dihydroxyacetone phosphate + an acyl-CoA = a 1-acylglycerone 3-phosphate + CoA. It carries out the reaction dihydroxyacetone phosphate + hexadecanoyl-CoA = 1-hexadecanoylglycerone 3-phosphate + CoA. Its pathway is membrane lipid metabolism; glycerophospholipid metabolism. In terms of biological role, dihydroxyacetonephosphate acyltransferase catalyzing the first step in the biosynthesis of plasmalogens, a subset of phospholipids that differ from other glycerolipids by having an alkyl chain attached through a vinyl ether linkage at the sn-1 position of the glycerol backbone, and which unique physical properties have an impact on various aspects of cell signaling and membrane biology. This Mus musculus (Mouse) protein is Dihydroxyacetone phosphate acyltransferase.